The chain runs to 108 residues: Nucleoid-associated protein CPS_3743 (108 aa).

A disordered region spans residues 87 to 108; the sequence is NKDKMGALTGGMQLPPGMKMPF.

Belongs to the YbaB/EbfC family. In terms of assembly, homodimer.

Its subcellular location is the cytoplasm. It localises to the nucleoid. Functionally, binds to DNA and alters its conformation. May be involved in regulation of gene expression, nucleoid organization and DNA protection. The sequence is that of Nucleoid-associated protein CPS_3743 from Colwellia psychrerythraea (strain 34H / ATCC BAA-681) (Vibrio psychroerythus).